We begin with the raw amino-acid sequence, 247 residues long: DNA repair protein RecO (247 aa).

It belongs to the RecO family.

In terms of biological role, involved in DNA repair and RecF pathway recombination. The sequence is that of DNA repair protein RecO from Caldanaerobacter subterraneus subsp. tengcongensis (strain DSM 15242 / JCM 11007 / NBRC 100824 / MB4) (Thermoanaerobacter tengcongensis).